A 736-amino-acid polypeptide reads, in one-letter code: Copper-exporting P-type ATPase (736 aa).

A compositionally biased stretch (basic residues) spans 1–17 (MKHDHHQGHTHSGKGHA). The tract at residues 1-32 (MKHDHHQGHTHSGKGHACHHEHNSPKTQQASS) is disordered. 6 helical membrane-spanning segments follow: residues 85–105 (FWIA…GHGL), 114–134 (SSWI…WPFF), 149–169 (FTLI…AVLW), 183–203 (VVAV…LGQV), 341–361 (GWFV…WALL), and 369–389 (YGLI…LGLA). Asp-426 acts as the 4-aspartylphosphate intermediate in catalysis. Asp-426, Thr-428, and Asp-624 together coordinate Mg(2+). The next 2 membrane-spanning stretches (helical) occupy residues 682-702 (LFFA…VLYP) and 706-726 (LLLS…SVII).

Belongs to the cation transport ATPase (P-type) (TC 3.A.3) family. Type IB subfamily. Requires Mg(2+) as cofactor.

It localises to the cell inner membrane. The enzyme catalyses Cu(+)(in) + ATP + H2O = Cu(+)(out) + ADP + phosphate + H(+). With respect to regulation, activated by phospholipids, Mg(2+) and Cu(+). Functionally, couples the hydrolysis of ATP with the export of copper. This is Copper-exporting P-type ATPase from Legionella pneumophila subsp. pneumophila (strain Philadelphia 1 / ATCC 33152 / DSM 7513).